Consider the following 400-residue polypeptide: Tryptophan synthase beta chain (400 aa).

N6-(pyridoxal phosphate)lysine is present on lysine 92.

This sequence belongs to the TrpB family. In terms of assembly, tetramer of two alpha and two beta chains. Pyridoxal 5'-phosphate serves as cofactor.

The catalysed reaction is (1S,2R)-1-C-(indol-3-yl)glycerol 3-phosphate + L-serine = D-glyceraldehyde 3-phosphate + L-tryptophan + H2O. The protein operates within amino-acid biosynthesis; L-tryptophan biosynthesis; L-tryptophan from chorismate: step 5/5. Functionally, the beta subunit is responsible for the synthesis of L-tryptophan from indole and L-serine. The chain is Tryptophan synthase beta chain from Neisseria meningitidis serogroup B (strain ATCC BAA-335 / MC58).